A 243-amino-acid polypeptide reads, in one-letter code: Ubiquinone/menaquinone biosynthesis C-methyltransferase UbiE (243 aa).

S-adenosyl-L-methionine-binding positions include threonine 69, aspartate 90, and 116-117; that span reads DA.

The protein belongs to the class I-like SAM-binding methyltransferase superfamily. MenG/UbiE family.

The catalysed reaction is a 2-demethylmenaquinol + S-adenosyl-L-methionine = a menaquinol + S-adenosyl-L-homocysteine + H(+). It catalyses the reaction a 2-methoxy-6-(all-trans-polyprenyl)benzene-1,4-diol + S-adenosyl-L-methionine = a 5-methoxy-2-methyl-3-(all-trans-polyprenyl)benzene-1,4-diol + S-adenosyl-L-homocysteine + H(+). Its pathway is quinol/quinone metabolism; menaquinone biosynthesis; menaquinol from 1,4-dihydroxy-2-naphthoate: step 2/2. The protein operates within cofactor biosynthesis; ubiquinone biosynthesis. Methyltransferase required for the conversion of demethylmenaquinol (DMKH2) to menaquinol (MKH2) and the conversion of 2-polyprenyl-6-methoxy-1,4-benzoquinol (DDMQH2) to 2-polyprenyl-3-methyl-6-methoxy-1,4-benzoquinol (DMQH2). In Cupriavidus taiwanensis (strain DSM 17343 / BCRC 17206 / CCUG 44338 / CIP 107171 / LMG 19424 / R1) (Ralstonia taiwanensis (strain LMG 19424)), this protein is Ubiquinone/menaquinone biosynthesis C-methyltransferase UbiE.